The following is a 441-amino-acid chain: GTPase Der (441 aa).

EngA-type G domains are found at residues 3–167 (PLIA…PKGS) and 176–351 (TKIA…EQFA). GTP contacts are provided by residues 9-16 (GRPNVGKS), 56-60 (DTGGF), 119-122 (NKID), 182-189 (GRPNVGKS), 229-233 (DTAGI), and 294-297 (NKWD). The KH-like domain maps to 352-436 (RRITTSDLNR…PMRLLFKGRE (85 aa)).

It belongs to the TRAFAC class TrmE-Era-EngA-EngB-Septin-like GTPase superfamily. EngA (Der) GTPase family. As to quaternary structure, associates with the 50S ribosomal subunit.

In terms of biological role, GTPase that plays an essential role in the late steps of ribosome biogenesis. The chain is GTPase Der from Geotalea uraniireducens (strain Rf4) (Geobacter uraniireducens).